The primary structure comprises 289 residues: Heme oxygenase 1, chloroplastic (289 aa).

Residues 1–64 (MAPAAASLTA…SASSSRRMVV (64 aa)) constitute a chloroplast transit peptide. Heme b is bound at residue His-96.

The protein belongs to the heme oxygenase family.

It is found in the plastid. Its subcellular location is the chloroplast. The catalysed reaction is heme b + 3 reduced [NADPH--hemoprotein reductase] + 3 O2 = biliverdin IXalpha + CO + Fe(2+) + 3 oxidized [NADPH--hemoprotein reductase] + 3 H2O + H(+). Its function is as follows. Catalyzes the opening of the heme ring to form the open-chain tetrapyrrole biliverdin IX with the release of iron and carbon monoxide (CO). Is a key enzyme in the synthesis of the chromophore of the phytochrome family of plant photoreceptors. Essential for photoperiod response and repression of flowering through cytochromes that inhibit flowering by affecting both HD1 and EHD1 flowering pathways. This chain is Heme oxygenase 1, chloroplastic (HO1), found in Oryza sativa subsp. japonica (Rice).